Consider the following 20-residue polypeptide: Thrombin-like enzyme okinaxobin-2 (20 aa).

Residues 1–20 (VVGGDECNINEHRFLVALYY) form the Peptidase S1 domain.

The protein belongs to the peptidase S1 family. Snake venom subfamily. In terms of assembly, monomer. Glycosylated. In terms of tissue distribution, expressed by the venom gland.

It is found in the secreted. With respect to regulation, strongly inactivated by diisopropylfluorophosphate (DFP) and to a lesser extent by tosyl-L-lysine chloromethyl ketone (TLCK). Its function is as follows. Thrombin-like snake venom serine protease. Releases both fibrinopeptides A and B from fibrinogen (FGA and FGB) to form fibrin clots. The chain is Thrombin-like enzyme okinaxobin-2 from Ovophis okinavensis (Ryukyu Island pit viper).